Consider the following 118-residue polypeptide: V-type proton ATPase subunit G 2 (118 aa).

The disordered stretch occupies residues Ala25–Arg90. Residues Gln35–Gln56 are compositionally biased toward basic and acidic residues. 2 stretches are compositionally biased toward polar residues: residues Ser57 to Leu69 and Arg78 to Gln89.

The protein belongs to the V-ATPase G subunit family. As to quaternary structure, V-ATPase is a heteromultimeric enzyme made up of two complexes: the ATP-hydrolytic V1 complex and the proton translocation V0 complex. The V1 complex consists of three catalytic AB heterodimers that form a heterohexamer, three peripheral stalks each consisting of EG heterodimers, one central rotor including subunits D and F, and the regulatory subunits C and H. The proton translocation complex V0 consists of the proton transport subunit a, a ring of proteolipid subunits c9c'', rotary subunit d, subunits e and f, and the accessory subunits ATP6AP1/Ac45 and ATP6AP2/PRR. As to expression, brain.

It is found in the melanosome. Its subcellular location is the cytoplasmic vesicle. The protein resides in the clathrin-coated vesicle membrane. In terms of biological role, subunit of the V1 complex of vacuolar(H+)-ATPase (V-ATPase), a multisubunit enzyme composed of a peripheral complex (V1) that hydrolyzes ATP and a membrane integral complex (V0) that translocates protons. V-ATPase is responsible for acidifying and maintaining the pH of intracellular compartments and in some cell types, is targeted to the plasma membrane, where it is responsible for acidifying the extracellular environment. In Homo sapiens (Human), this protein is V-type proton ATPase subunit G 2 (ATP6V1G2).